Reading from the N-terminus, the 273-residue chain is Large ribosomal subunit protein uL2 (273 aa).

Disordered stretches follow at residues 28-53 and 221-273; these read KPFAPLVEKNSKSGGRNNNGRITTRH and RGTA…RRSK. The segment covering 39-48 has biased composition (low complexity); that stretch reads KSGGRNNNGR.

The protein belongs to the universal ribosomal protein uL2 family. As to quaternary structure, part of the 50S ribosomal subunit. Forms a bridge to the 30S subunit in the 70S ribosome.

Functionally, one of the primary rRNA binding proteins. Required for association of the 30S and 50S subunits to form the 70S ribosome, for tRNA binding and peptide bond formation. It has been suggested to have peptidyltransferase activity; this is somewhat controversial. Makes several contacts with the 16S rRNA in the 70S ribosome. This is Large ribosomal subunit protein uL2 from Salmonella agona (strain SL483).